A 392-amino-acid polypeptide reads, in one-letter code: Formate-dependent phosphoribosylglycinamide formyltransferase (392 aa).

N(1)-(5-phospho-beta-D-ribosyl)glycinamide-binding positions include 22-23 (EL) and Glu-82. ATP is bound by residues Arg-114, Lys-155, 160–165 (SSGKGQ), 195–198 (EGLV), and Glu-203. The 190-residue stretch at 119–308 (RLAAETLGVP…EFALHVRAFL (190 aa)) folds into the ATP-grasp domain. Mg(2+) is bound by residues Glu-267 and Glu-279. N(1)-(5-phospho-beta-D-ribosyl)glycinamide contacts are provided by residues Asp-286, Lys-355, and 362-363 (RR).

Belongs to the PurK/PurT family. Homodimer.

The catalysed reaction is N(1)-(5-phospho-beta-D-ribosyl)glycinamide + formate + ATP = N(2)-formyl-N(1)-(5-phospho-beta-D-ribosyl)glycinamide + ADP + phosphate + H(+). Its pathway is purine metabolism; IMP biosynthesis via de novo pathway; N(2)-formyl-N(1)-(5-phospho-D-ribosyl)glycinamide from N(1)-(5-phospho-D-ribosyl)glycinamide (formate route): step 1/1. Involved in the de novo purine biosynthesis. Catalyzes the transfer of formate to 5-phospho-ribosyl-glycinamide (GAR), producing 5-phospho-ribosyl-N-formylglycinamide (FGAR). Formate is provided by PurU via hydrolysis of 10-formyl-tetrahydrofolate. This chain is Formate-dependent phosphoribosylglycinamide formyltransferase, found in Pectobacterium carotovorum subsp. carotovorum (strain PC1).